The sequence spans 199 residues: 7-methyl-GTP pyrophosphatase (199 aa).

Asp76 acts as the Proton acceptor in catalysis.

This sequence belongs to the Maf family. YceF subfamily. A divalent metal cation serves as cofactor.

The protein localises to the cytoplasm. The enzyme catalyses N(7)-methyl-GTP + H2O = N(7)-methyl-GMP + diphosphate + H(+). Functionally, nucleoside triphosphate pyrophosphatase that hydrolyzes 7-methyl-GTP (m(7)GTP). May have a dual role in cell division arrest and in preventing the incorporation of modified nucleotides into cellular nucleic acids. The sequence is that of 7-methyl-GTP pyrophosphatase from Mesorhizobium japonicum (strain LMG 29417 / CECT 9101 / MAFF 303099) (Mesorhizobium loti (strain MAFF 303099)).